The primary structure comprises 635 residues: Allantoin permease (635 aa).

Residues 1-144 are Cytoplasmic-facing; it reads MANDALSAIF…AGTGLQLGLN (144 aa). Residues 145-165 form a helical membrane-spanning segment; sequence WWQCWLTVWIGYTFAGIFVVL. The Extracellular portion of the chain corresponds to 166–174; it reads NSRFGSAYH. The helical transmembrane segment at 175–195 threads the bilayer; the sequence is LSFPITVRASFGIFFSMWPII. The Cytoplasmic portion of the chain corresponds to 196–198; sequence NRV. Residues 199–219 form a helical membrane-spanning segment; sequence VMAIVWYAVQAWLGATPVALM. The Extracellular portion of the chain corresponds to 220–243; it reads LKSIFGKNLEDRIPNHFGSPNSTT. Residues 244-264 form a helical membrane-spanning segment; it reads FEFMCFFIFWVVSIPFVLVAP. Residues 265–269 are Cytoplasmic-facing; that stretch reads HKIRH. The chain crosses the membrane as a helical span at residues 270–290; sequence LFTVKAALIPFAAFGFLIWAL. Topologically, residues 291-311 are extracellular; that stretch reads KKSHGKIELGTLNDYSPHGSE. A helical membrane pass occupies residues 312-332; the sequence is FSWIFVRSLMACVANFAALII. At 333 to 351 the chain is on the cytoplasmic side; the sequence is NAPDFGRFAKNPQASLWPQ. A helical transmembrane segment spans residues 352-372; the sequence is LVAIPLFFAITCLIGIIVTAA. Residues 373–401 are Extracellular-facing; that stretch reads GYHLYGVNYWSPLDVLGQFLETTYTRGTR. The chain crosses the membrane as a helical span at residues 402 to 422; that stretch reads AGVFLISFVFALAQLGTNISA. Over 423–443 the chain is Cytoplasmic; that stretch reads NSLACGADMTALFPRYINIRR. A helical transmembrane segment spans residues 444–464; the sequence is GSLFCVAMALCICPWNLMASS. Over 465–466 the chain is Extracellular; the sequence is SK. The chain crosses the membrane as a helical span at residues 467 to 487; it reads FTSALGAYAIFLSSIAGVICA. Topologically, residues 488-522 are cytoplasmic; that stretch reads DYFVVRRGYVKLTHLFLAQKGSFYMFGNKFGANWR. The helical transmembrane segment at 523 to 543 threads the bilayer; the sequence is AFVAYICGIAPNLPGFIGDVG. Topologically, residues 544–560 are extracellular; the sequence is APKITVSEGAMRLYYLG. The helical transmembrane segment at 561-581 threads the bilayer; the sequence is YPVGFFISAVIYLILCYFFPV. Residues 582–635 lie on the Cytoplasmic side of the membrane; that stretch reads PGTPVTNFLTEKGWFQRWAYVEDFEQDWKNELRRDDLCDDTVSIYDGTEEKIVY.

It belongs to the purine-cytosine permease (2.A.39) family.

It localises to the membrane. Transport of allantoin. The sequence is that of Allantoin permease (DAL4) from Saccharomyces cerevisiae (strain ATCC 204508 / S288c) (Baker's yeast).